Reading from the N-terminus, the 155-residue chain is F-box only protein 48 (155 aa).

The tract at residues 1 to 27 is disordered; sequence MHKNSKRNNNLRVSHTEANSVDAEKEK. Over residues 7–19 the composition is skewed to polar residues; the sequence is RNNNLRVSHTEAN. Positions 32–79 constitute an F-box domain; that stretch reads NNFFELLPAEITFKIFSQLDIRSLCRASLTCRSWNDTIRNSDSLWKPH.

This Homo sapiens (Human) protein is F-box only protein 48 (FBXO48).